A 539-amino-acid polypeptide reads, in one-letter code: Effector protein hopAB1 (539 aa).

Disordered stretches follow at residues 1 to 93 (MPGI…PEAQ), 163 to 220 (QTVR…RHPQ), 230 to 249 (ASAA…LRRL), and 315 to 336 (RQTT…SGRR). Basic and acidic residues predominate over residues 18 to 31 (TDGEPVTEREHDSS). Low complexity predominate over residues 181 to 194 (SSSGSSQRSLIGRS).

Belongs to the HopAB family.

It localises to the secreted. Effector protein that plays different roles depending on the species and plant cultivars that interact with the pathogen. Acts as a virulence determinant by enhancing the development of disease symptoms and bacterial growth. Acts as an avirulence factor by eliciting hypersensitive response (HR) and plant resistance. This chain is Effector protein hopAB1 (hopAB1), found in Pseudomonas savastanoi pv. phaseolicola (strain 1448A / Race 6) (Pseudomonas syringae pv. phaseolicola (strain 1448A / Race 6)).